Here is a 355-residue protein sequence, read N- to C-terminus: Ubiquinone biosynthesis protein COQ4 homolog, mitochondrial (355 aa).

Positions 134, 135, 138, and 150 each coordinate Zn(2+).

The protein belongs to the COQ4 family. As to quaternary structure, component of a multi-subunit COQ enzyme complex. It depends on Zn(2+) as a cofactor.

It localises to the mitochondrion inner membrane. It catalyses the reaction a 4-hydroxy-3-methoxy-5-(all-trans-polyprenyl)benzoate + H(+) = a 2-methoxy-6-(all-trans-polyprenyl)phenol + CO2. The protein operates within cofactor biosynthesis; ubiquinone biosynthesis. In terms of biological role, lyase that catalyzes the C1-decarboxylation of 4-hydroxy-3-methoxy-5-(all-trans-polyprenyl)benzoic acid into 2-methoxy-6-(all-trans-polyprenyl)phenol during ubiquinone biosynthesis. This Plasmodium yoelii yoelii protein is Ubiquinone biosynthesis protein COQ4 homolog, mitochondrial.